Reading from the N-terminus, the 151-residue chain is Caveolin-3 (151 aa).

At 1–83 (MMAEEHTDLE…RLLSTLLGVP (83 aa)) the chain is on the cytoplasmic side. Residue Lys-38 forms a Glycyl lysine isopeptide (Lys-Gly) (interchain with G-Cter in SUMO3) linkage. Positions 64-114 (TFTVSKYWCYRLLSTLLGVPLALLWGFLFACISFCHIWAVVPCIKSYLIEI) are required for interaction with DAG1. Positions 84-104 (LALLWGFLFACISFCHIWAVV) form an intramembrane region, helical. At 105 to 151 (PCIKSYLIEIQCISHIYSLCIRTFCNPLFAALGQVCSNIKVMLRKEV) the chain is on the cytoplasmic side.

This sequence belongs to the caveolin family. As to quaternary structure, homooligomer. Interacts with DYSF. Interacts with DLG1 and KCNA5; forms a ternary complex. Interacts with DAG1 (via its C-terminal); the interaction prevents binding of DAG1 with DMD. Interacts with TRIM72. Interacts with MUSK; may regulate MUSK signaling. Interacts with POPDC1. Interacts with CAVIN1, CAVIN2 and CAVIN4. Post-translationally, sumoylation with SUMO3 by PIAS4 may reduce agonist-induced internalization and desensitization of adrenergic receptor ABRD2.

Its subcellular location is the golgi apparatus membrane. It localises to the cell membrane. The protein resides in the membrane. It is found in the caveola. The protein localises to the sarcolemma. In terms of biological role, may act as a scaffolding protein within caveolar membranes. Interacts directly with G-protein alpha subunits and can functionally regulate their activity. May also regulate voltage-gated potassium channels. Plays a role in the sarcolemma repair mechanism of both skeletal muscle and cardiomyocytes that permits rapid resealing of membranes disrupted by mechanical stress. Mediates the recruitment of CAVIN2 and CAVIN3 proteins to the caveolae. In Bos taurus (Bovine), this protein is Caveolin-3 (CAV3).